The primary structure comprises 182 residues: Negative transcriptional regulator PadR (182 aa).

The protein belongs to the PadR family. As to quaternary structure, homodimer.

It is found in the cytoplasm. With respect to regulation, padR repressor activity is inhibited in the presence of phenolic acids, which directly modulate PadR binding to the promoter of padC, leading to the dissociation of PadR from the operator DNA and expression of padC. In the presence of MgCl(2), binding is not altered by phenolic acids. Its function is as follows. Transcriptional regulator involved in the regulation of the metabolism of phenolic acids. In the absence of phenolic acids, represses the expression of padC, which encodes a phenolic acid decarboxylase (PAD) involved in the detoxification of harmful phenolic acids. Acts by binding to the padC promoter region, preventing the transcription of the gene. This chain is Negative transcriptional regulator PadR, found in Bacillus subtilis (strain 168).